The following is a 334-amino-acid chain: tRNA U34 carboxymethyltransferase (334 aa).

Residues lysine 91, tryptophan 105, lysine 110, glycine 130, aspartate 152–threonine 154, isoleucine 181–glutamate 182, methionine 196, tyrosine 200, and arginine 315 each bind carboxy-S-adenosyl-L-methionine.

This sequence belongs to the class I-like SAM-binding methyltransferase superfamily. CmoB family. In terms of assembly, homotetramer.

It catalyses the reaction carboxy-S-adenosyl-L-methionine + 5-hydroxyuridine(34) in tRNA = 5-carboxymethoxyuridine(34) in tRNA + S-adenosyl-L-homocysteine + H(+). Catalyzes carboxymethyl transfer from carboxy-S-adenosyl-L-methionine (Cx-SAM) to 5-hydroxyuridine (ho5U) to form 5-carboxymethoxyuridine (cmo5U) at position 34 in tRNAs. The chain is tRNA U34 carboxymethyltransferase from Klebsiella pneumoniae (strain 342).